The primary structure comprises 448 residues: N-succinylarginine dihydrolase (448 aa).

Substrate-binding positions include 19 to 28 (AGLSYGNVAS), Asn-110, and 137 to 138 (HR). Glu-174 is an active-site residue. Residue Arg-214 participates in substrate binding. His-250 is a catalytic residue. Asp-252 and Asn-364 together coordinate substrate. Cys-370 (nucleophile) is an active-site residue.

This sequence belongs to the succinylarginine dihydrolase family. In terms of assembly, homodimer.

The catalysed reaction is N(2)-succinyl-L-arginine + 2 H2O + 2 H(+) = N(2)-succinyl-L-ornithine + 2 NH4(+) + CO2. It functions in the pathway amino-acid degradation; L-arginine degradation via AST pathway; L-glutamate and succinate from L-arginine: step 2/5. Catalyzes the hydrolysis of N(2)-succinylarginine into N(2)-succinylornithine, ammonia and CO(2). The polypeptide is N-succinylarginine dihydrolase (Pseudoalteromonas translucida (strain TAC 125)).